The following is a 137-amino-acid chain: Endoribonuclease YbeY (137 aa).

Zn(2+)-binding residues include His107, His111, and Asp117.

It belongs to the endoribonuclease YbeY family. The cofactor is Zn(2+).

The protein resides in the cytoplasm. In terms of biological role, single strand-specific metallo-endoribonuclease involved in late-stage 70S ribosome quality control and in maturation of the 3' terminus of the 16S rRNA. The polypeptide is Endoribonuclease YbeY (Bacteroides thetaiotaomicron (strain ATCC 29148 / DSM 2079 / JCM 5827 / CCUG 10774 / NCTC 10582 / VPI-5482 / E50)).